The following is a 251-amino-acid chain: Probable metal-binding protein YrpE (251 aa).

An N-terminal signal peptide occupies residues 1–30; it reads MNILFSKRLGILTIGSLLVLAGCQTSGSSA. The span at 25–41 shows a compositional bias: polar residues; it reads TSGSSAGESNQTTSSSA. Residues 25–72 are disordered; it reads TSGSSAGESNQTTSSSAVEEDSSKTQEQTSDSHTHEHSHDHSHAHDEE. The segment covering 54 to 72 has biased composition (basic and acidic residues); sequence SDSHTHEHSHDHSHAHDEE. The Zn(2+) site is built by His-203, His-212, His-214, Glu-247, and His-251.

It belongs to the calycin superfamily. ZinT family.

This is Probable metal-binding protein YrpE (yrpE) from Bacillus subtilis (strain 168).